The chain runs to 209 residues: Thymidylate kinase (209 aa).

11-18 (GPDGAGKT) contributes to the ATP binding site.

This sequence belongs to the thymidylate kinase family.

It catalyses the reaction dTMP + ATP = dTDP + ADP. Functionally, phosphorylation of dTMP to form dTDP in both de novo and salvage pathways of dTTP synthesis. In Streptococcus thermophilus (strain ATCC BAA-250 / LMG 18311), this protein is Thymidylate kinase.